The sequence spans 128 residues: uncharacterized protein (128 aa).

The protein localises to the mitochondrion. This is an uncharacterized protein from Schizosaccharomyces pombe (strain 972 / ATCC 24843) (Fission yeast).